The primary structure comprises 161 residues: Phosphopantetheine adenylyltransferase (161 aa).

Ser11 serves as a coordination point for substrate. ATP is bound by residues 11 to 12 (SF) and His19. Lys43, Leu75, and Arg89 together coordinate substrate. ATP contacts are provided by residues 90 to 92 (GLR), Glu100, and 125 to 131 (YSYLSSS).

The protein belongs to the bacterial CoaD family. In terms of assembly, homohexamer. Mg(2+) serves as cofactor.

It is found in the cytoplasm. The enzyme catalyses (R)-4'-phosphopantetheine + ATP + H(+) = 3'-dephospho-CoA + diphosphate. It participates in cofactor biosynthesis; coenzyme A biosynthesis; CoA from (R)-pantothenate: step 4/5. Functionally, reversibly transfers an adenylyl group from ATP to 4'-phosphopantetheine, yielding dephospho-CoA (dPCoA) and pyrophosphate. In Citrifermentans bemidjiense (strain ATCC BAA-1014 / DSM 16622 / JCM 12645 / Bem) (Geobacter bemidjiensis), this protein is Phosphopantetheine adenylyltransferase.